The sequence spans 291 residues: Pyridoxal 5'-phosphate synthase subunit PdxS (291 aa).

Asp23 is a D-ribose 5-phosphate binding site. Residue Lys80 is the Schiff-base intermediate with D-ribose 5-phosphate of the active site. D-ribose 5-phosphate is bound at residue Gly152. Arg164 is a D-glyceraldehyde 3-phosphate binding site. Residues Gly213 and 234–235 (GS) contribute to the D-ribose 5-phosphate site.

The protein belongs to the PdxS/SNZ family. In terms of assembly, in the presence of PdxT, forms a dodecamer of heterodimers.

The catalysed reaction is aldehydo-D-ribose 5-phosphate + D-glyceraldehyde 3-phosphate + L-glutamine = pyridoxal 5'-phosphate + L-glutamate + phosphate + 3 H2O + H(+). It functions in the pathway cofactor biosynthesis; pyridoxal 5'-phosphate biosynthesis. Its function is as follows. Catalyzes the formation of pyridoxal 5'-phosphate from ribose 5-phosphate (RBP), glyceraldehyde 3-phosphate (G3P) and ammonia. The ammonia is provided by the PdxT subunit. Can also use ribulose 5-phosphate and dihydroxyacetone phosphate as substrates, resulting from enzyme-catalyzed isomerization of RBP and G3P, respectively. The protein is Pyridoxal 5'-phosphate synthase subunit PdxS of Streptococcus pneumoniae (strain P1031).